The chain runs to 236 residues: Small ribosomal subunit protein uS2c (236 aa).

It belongs to the universal ribosomal protein uS2 family.

The protein resides in the plastid. The protein is Small ribosomal subunit protein uS2c (rps2) of Cuscuta obtusiflora (Peruvian dodder).